Reading from the N-terminus, the 83-residue chain is U5-theraphotoxin-Hs1a 3 (83 aa).

The signal sequence occupies residues 1–21 (MKTSMFLTLTGLVLLFVVCYA). Residues 22–49 (SESEEKDFPKELLSSIFAADSDFKVEER) constitute a propeptide that is removed on maturation. 3 cysteine pairs are disulfide-bonded: Cys-51–Cys-63, Cys-56–Cys-68, and Cys-62–Cys-75.

It belongs to the neurotoxin 10 (Hwtx-1) family. 51 (Hntx-8) subfamily. Hntx-8 sub-subfamily. Expressed by the venom gland.

The protein resides in the secreted. In terms of biological role, agglutinates erythrocytes. The sequence is that of U5-theraphotoxin-Hs1a 3 from Cyriopagopus schmidti (Chinese bird spider).